The sequence spans 122 residues: Large ribosomal subunit protein uL14 (122 aa).

Belongs to the universal ribosomal protein uL14 family. Part of the 50S ribosomal subunit. Forms a cluster with proteins L3 and L19. In the 70S ribosome, L14 and L19 interact and together make contacts with the 16S rRNA in bridges B5 and B8.

Functionally, binds to 23S rRNA. Forms part of two intersubunit bridges in the 70S ribosome. In Dehalococcoides mccartyi (strain ATCC BAA-2100 / JCM 16839 / KCTC 5957 / BAV1), this protein is Large ribosomal subunit protein uL14.